A 248-amino-acid chain; its full sequence is Probable transcriptional regulatory protein Syncc9902_0542 (248 aa).

The protein belongs to the TACO1 family.

The protein resides in the cytoplasm. The chain is Probable transcriptional regulatory protein Syncc9902_0542 from Synechococcus sp. (strain CC9902).